Reading from the N-terminus, the 368-residue chain is 1-deoxy-D-xylulose 5-phosphate reductoisomerase (368 aa).

Positions 7, 8, 9, 10, 31, 32, 33, and 113 each coordinate NADPH. 1-deoxy-D-xylulose 5-phosphate is bound at residue Lys114. Glu115 provides a ligand contact to NADPH. Residue Asp133 coordinates Mn(2+). Residues Ser134, Glu135, Ser158, and His181 each coordinate 1-deoxy-D-xylulose 5-phosphate. Glu135 is a Mn(2+) binding site. Gly187 provides a ligand contact to NADPH. Residues Ser194, Asn199, Lys200, and Glu203 each contribute to the 1-deoxy-D-xylulose 5-phosphate site. Residue Glu203 participates in Mn(2+) binding.

It belongs to the DXR family. The cofactor is Mg(2+). Requires Mn(2+) as cofactor.

The catalysed reaction is 2-C-methyl-D-erythritol 4-phosphate + NADP(+) = 1-deoxy-D-xylulose 5-phosphate + NADPH + H(+). Its pathway is isoprenoid biosynthesis; isopentenyl diphosphate biosynthesis via DXP pathway; isopentenyl diphosphate from 1-deoxy-D-xylulose 5-phosphate: step 1/6. Functionally, catalyzes the NADPH-dependent rearrangement and reduction of 1-deoxy-D-xylulose-5-phosphate (DXP) to 2-C-methyl-D-erythritol 4-phosphate (MEP). The protein is 1-deoxy-D-xylulose 5-phosphate reductoisomerase of Helicobacter pylori (strain P12).